The chain runs to 224 residues: UPF0758 protein CBUD_1789 (224 aa).

The MPN domain maps to 102–224 (QLGCTQDAQQ…SFSFAESGLL (123 aa)). Zn(2+) contacts are provided by histidine 173, histidine 175, and aspartate 186. The JAMM motif motif lies at 173 to 186 (HNHPSGVPDPSQAD).

It belongs to the UPF0758 family.

In Coxiella burnetii (strain Dugway 5J108-111), this protein is UPF0758 protein CBUD_1789.